A 470-amino-acid polypeptide reads, in one-letter code: uncharacterized protein (470 aa).

Residues 1-337 form the SPX domain; the sequence is MKFGHDFKRA…SLTAQPLFFQ (337 aa). The tract at residues 118-145 is disordered; that stretch reads ASNVPSTPSDSTQQPPTNTLPSVSASSQ. Low complexity predominate over residues 122-136; the sequence is PSTPSDSTQQPPTNT. The RING-type zinc finger occupies 374-413; sequence CAICSNVAYKPVRLGCSHVFCLHCLIILQKQKVDFCPLCR.

The protein localises to the cytoplasm. This is an uncharacterized protein from Schizosaccharomyces pombe (strain 972 / ATCC 24843) (Fission yeast).